A 192-amino-acid polypeptide reads, in one-letter code: Thymidine kinase (192 aa).

ATP contacts are provided by residues Ser9–Ser16 and Asp87–Gln90. The active-site Proton acceptor is the Glu88. The Zn(2+) site is built by Cys145, Cys147, Cys182, and His185.

It belongs to the thymidine kinase family. As to quaternary structure, homotetramer.

The protein localises to the cytoplasm. The enzyme catalyses thymidine + ATP = dTMP + ADP + H(+). In Vibrio cholerae serotype O1 (strain ATCC 39315 / El Tor Inaba N16961), this protein is Thymidine kinase.